Consider the following 140-residue polypeptide: Putative pre-16S rRNA nuclease (140 aa).

Belongs to the YqgF nuclease family.

The protein localises to the cytoplasm. Could be a nuclease involved in processing of the 5'-end of pre-16S rRNA. In Lachnospira eligens (strain ATCC 27750 / DSM 3376 / VPI C15-48 / C15-B4) (Eubacterium eligens), this protein is Putative pre-16S rRNA nuclease.